A 460-amino-acid chain; its full sequence is ATP synthase subunit beta (460 aa).

150–157 (GGAGVGKT) is an ATP binding site.

It belongs to the ATPase alpha/beta chains family. As to quaternary structure, F-type ATPases have 2 components, CF(1) - the catalytic core - and CF(0) - the membrane proton channel. CF(1) has five subunits: alpha(3), beta(3), gamma(1), delta(1), epsilon(1). CF(0) has three main subunits: a(1), b(2) and c(9-12). The alpha and beta chains form an alternating ring which encloses part of the gamma chain. CF(1) is attached to CF(0) by a central stalk formed by the gamma and epsilon chains, while a peripheral stalk is formed by the delta and b chains.

It is found in the cell inner membrane. It carries out the reaction ATP + H2O + 4 H(+)(in) = ADP + phosphate + 5 H(+)(out). In terms of biological role, produces ATP from ADP in the presence of a proton gradient across the membrane. The catalytic sites are hosted primarily by the beta subunits. The polypeptide is ATP synthase subunit beta (Pectobacterium carotovorum subsp. carotovorum (strain PC1)).